The following is an 80-amino-acid chain: Acyl carrier protein (80 aa).

Residues 1-76 (MTLEEKIIEI…DVIDYLKVRN (76 aa)) enclose the Carrier domain. Ser-36 is subject to O-(pantetheine 4'-phosphoryl)serine.

Belongs to the acyl carrier protein (ACP) family. Post-translationally, 4'-phosphopantetheine is transferred from CoA to a specific serine of apo-ACP by AcpS. This modification is essential for activity because fatty acids are bound in thioester linkage to the sulfhydryl of the prosthetic group.

The protein localises to the cytoplasm. Its pathway is lipid metabolism; fatty acid biosynthesis. In terms of biological role, carrier of the growing fatty acid chain in fatty acid biosynthesis. In Syntrophus aciditrophicus (strain SB), this protein is Acyl carrier protein.